Reading from the N-terminus, the 315-residue chain is Methionyl-tRNA formyltransferase (315 aa).

A (6S)-5,6,7,8-tetrahydrofolate-binding site is contributed by 113-116; sequence SLLP.

Belongs to the Fmt family.

The enzyme catalyses L-methionyl-tRNA(fMet) + (6R)-10-formyltetrahydrofolate = N-formyl-L-methionyl-tRNA(fMet) + (6S)-5,6,7,8-tetrahydrofolate + H(+). Attaches a formyl group to the free amino group of methionyl-tRNA(fMet). The formyl group appears to play a dual role in the initiator identity of N-formylmethionyl-tRNA by promoting its recognition by IF2 and preventing the misappropriation of this tRNA by the elongation apparatus. In Shigella boydii serotype 18 (strain CDC 3083-94 / BS512), this protein is Methionyl-tRNA formyltransferase.